The following is a 127-amino-acid chain: Aspartate 1-decarboxylase (127 aa).

Residue serine 25 is the Schiff-base intermediate with substrate; via pyruvic acid of the active site. Position 25 is a pyruvic acid (Ser) (serine 25). Residue threonine 57 coordinates substrate. Tyrosine 58 acts as the Proton donor in catalysis. A substrate-binding site is contributed by 73–75 (GAA).

It belongs to the PanD family. As to quaternary structure, heterooctamer of four alpha and four beta subunits. Pyruvate serves as cofactor. Is synthesized initially as an inactive proenzyme, which is activated by self-cleavage at a specific serine bond to produce a beta-subunit with a hydroxyl group at its C-terminus and an alpha-subunit with a pyruvoyl group at its N-terminus.

It localises to the cytoplasm. It catalyses the reaction L-aspartate + H(+) = beta-alanine + CO2. The protein operates within cofactor biosynthesis; (R)-pantothenate biosynthesis; beta-alanine from L-aspartate: step 1/1. In terms of biological role, catalyzes the pyruvoyl-dependent decarboxylation of aspartate to produce beta-alanine. This chain is Aspartate 1-decarboxylase, found in Clostridium acetobutylicum (strain ATCC 824 / DSM 792 / JCM 1419 / IAM 19013 / LMG 5710 / NBRC 13948 / NRRL B-527 / VKM B-1787 / 2291 / W).